Consider the following 330-residue polypeptide: Aspartate--ammonia ligase (330 aa).

The protein belongs to the class-II aminoacyl-tRNA synthetase family. AsnA subfamily.

The protein resides in the cytoplasm. It catalyses the reaction L-aspartate + NH4(+) + ATP = L-asparagine + AMP + diphosphate + H(+). It participates in amino-acid biosynthesis; L-asparagine biosynthesis; L-asparagine from L-aspartate (ammonia route): step 1/1. The sequence is that of Aspartate--ammonia ligase from Serratia proteamaculans (strain 568).